The sequence spans 561 residues: Oxygen-dependent choline dehydrogenase (561 aa).

6–35 provides a ligand contact to FAD; the sequence is DYIIIGAGSAGNVLATRLTEDADVSVLLLE. Histidine 475 functions as the Proton acceptor in the catalytic mechanism.

It belongs to the GMC oxidoreductase family. The cofactor is FAD.

It carries out the reaction choline + A = betaine aldehyde + AH2. It catalyses the reaction betaine aldehyde + NAD(+) + H2O = glycine betaine + NADH + 2 H(+). The protein operates within amine and polyamine biosynthesis; betaine biosynthesis via choline pathway; betaine aldehyde from choline (cytochrome c reductase route): step 1/1. Involved in the biosynthesis of the osmoprotectant glycine betaine. Catalyzes the oxidation of choline to betaine aldehyde and betaine aldehyde to glycine betaine at the same rate. This chain is Oxygen-dependent choline dehydrogenase, found in Pseudomonas aeruginosa (strain LESB58).